Consider the following 429-residue polypeptide: Ribosomal RNA small subunit methyltransferase B (429 aa).

S-adenosyl-L-methionine is bound by residues 254 to 260 (CAAPGGK), aspartate 277, aspartate 303, and aspartate 322. Residue cysteine 375 is the Nucleophile of the active site. The disordered stretch occupies residues 397 to 419 (ALSETGTPDQPGQQNLPGGEEGD). The span at 400 to 412 (ETGTPDQPGQQNL) shows a compositional bias: polar residues.

This sequence belongs to the class I-like SAM-binding methyltransferase superfamily. RsmB/NOP family.

The protein resides in the cytoplasm. It catalyses the reaction cytidine(967) in 16S rRNA + S-adenosyl-L-methionine = 5-methylcytidine(967) in 16S rRNA + S-adenosyl-L-homocysteine + H(+). In terms of biological role, specifically methylates the cytosine at position 967 (m5C967) of 16S rRNA. This chain is Ribosomal RNA small subunit methyltransferase B, found in Salmonella enteritidis PT4 (strain P125109).